We begin with the raw amino-acid sequence, 361 residues long: Alanine racemase (361 aa).

Residue lysine 35 is the Proton acceptor; specific for D-alanine of the active site. Lysine 35 is modified (N6-(pyridoxal phosphate)lysine). Residue arginine 132 coordinates substrate. Tyrosine 257 acts as the Proton acceptor; specific for L-alanine in catalysis. Residue methionine 305 participates in substrate binding.

It belongs to the alanine racemase family. It depends on pyridoxal 5'-phosphate as a cofactor.

The catalysed reaction is L-alanine = D-alanine. Its pathway is amino-acid biosynthesis; D-alanine biosynthesis; D-alanine from L-alanine: step 1/1. In terms of biological role, catalyzes the interconversion of L-alanine and D-alanine. May also act on other amino acids. This chain is Alanine racemase (alr), found in Thioalkalivibrio sulfidiphilus (strain HL-EbGR7).